The sequence spans 247 residues: 5-oxoprolinase subunit A (247 aa).

Belongs to the LamB/PxpA family. In terms of assembly, forms a complex composed of PxpA, PxpB and PxpC.

The catalysed reaction is 5-oxo-L-proline + ATP + 2 H2O = L-glutamate + ADP + phosphate + H(+). Functionally, catalyzes the cleavage of 5-oxoproline to form L-glutamate coupled to the hydrolysis of ATP to ADP and inorganic phosphate. In Klebsiella pneumoniae subsp. pneumoniae (strain ATCC 700721 / MGH 78578), this protein is 5-oxoprolinase subunit A.